A 202-amino-acid polypeptide reads, in one-letter code: MPIGVPKVPFRSPGEEDAVWVDIYNRLHRERLLFLGQGVDSEISNQLVGLMVYLSMEDNTRDLYLFINSPGGWVIPGIAIYDAMQIVPPDVHTICMGLAASMGSFILVGGEFTKRLAFPHARVMIHQPASSFYEAQAGEFILEAEELLKLREILTRVYVQRTGKPLWVVSEDMERDVFMSATEAQAHGIVDLVAVENSADFV.

Residue Ser-101 is the Nucleophile of the active site. His-126 is an active-site residue.

This sequence belongs to the peptidase S14 family. Component of the chloroplastic Clp protease core complex.

The protein resides in the plastid. It is found in the chloroplast stroma. The catalysed reaction is Hydrolysis of proteins to small peptides in the presence of ATP and magnesium. alpha-casein is the usual test substrate. In the absence of ATP, only oligopeptides shorter than five residues are hydrolyzed (such as succinyl-Leu-Tyr-|-NHMec, and Leu-Tyr-Leu-|-Tyr-Trp, in which cleavage of the -Tyr-|-Leu- and -Tyr-|-Trp bonds also occurs).. Cleaves peptides in various proteins in a process that requires ATP hydrolysis. Has a chymotrypsin-like activity. Plays a major role in the degradation of misfolded proteins. This is ATP-dependent Clp protease proteolytic subunit from Nuphar advena (Common spatterdock).